The primary structure comprises 304 residues: uncharacterized protein (304 aa).

Helical transmembrane passes span 5–25 (TIIL…FIAI), 42–62 (FLLA…PLLF), 68–88 (IFQL…ILYG), 96–116 (IASV…FIFF), 120–140 (LYFF…IILF), 150–170 (TIKG…IYLY), 178–198 (ISIL…FLVI), 215–235 (ILAT…SYFY), 245–265 (ASTI…FVWG), and 268–288 (IGID…ITIF). 2 consecutive EamA domains span residues 16–140 (ITWG…IILF) and 162–288 (TSHA…ITIF).

It belongs to the EamA transporter family.

Its subcellular location is the cell membrane. This is an uncharacterized protein from Buchnera aphidicola subsp. Schlechtendalia chinensis.